The following is a 131-amino-acid chain: Urease subunit beta (131 aa).

The disordered stretch occupies residues 100–131 (PLDPAAGVTSDEDAASAVVPRGAETSEREARA).

The protein belongs to the urease beta subunit family. In terms of assembly, heterotrimer of UreA (gamma), UreB (beta) and UreC (alpha) subunits. Three heterotrimers associate to form the active enzyme.

The protein localises to the cytoplasm. The enzyme catalyses urea + 2 H2O + H(+) = hydrogencarbonate + 2 NH4(+). It functions in the pathway nitrogen metabolism; urea degradation; CO(2) and NH(3) from urea (urease route): step 1/1. This Kocuria rhizophila (strain ATCC 9341 / DSM 348 / NBRC 103217 / DC2201) protein is Urease subunit beta.